The following is a 254-amino-acid chain: Adenosylcobinamide-GDP ribazoletransferase (254 aa).

The next 6 helical transmembrane spans lie at 28–48, 62–81, 109–129, 138–158, 179–199, and 200–220; these read FRQT…IVAL, IGVY…IDGI, VGVG…LGVL, VTFI…ALLV, LSLF…PYLG, and ASPT…IKQW.

The protein belongs to the CobS family. Mg(2+) serves as cofactor.

The protein localises to the cell membrane. It carries out the reaction alpha-ribazole + adenosylcob(III)inamide-GDP = adenosylcob(III)alamin + GMP + H(+). The enzyme catalyses alpha-ribazole 5'-phosphate + adenosylcob(III)inamide-GDP = adenosylcob(III)alamin 5'-phosphate + GMP + H(+). It functions in the pathway cofactor biosynthesis; adenosylcobalamin biosynthesis; adenosylcobalamin from cob(II)yrinate a,c-diamide: step 7/7. Its function is as follows. Joins adenosylcobinamide-GDP and alpha-ribazole to generate adenosylcobalamin (Ado-cobalamin). Also synthesizes adenosylcobalamin 5'-phosphate from adenosylcobinamide-GDP and alpha-ribazole 5'-phosphate. The sequence is that of Adenosylcobinamide-GDP ribazoletransferase from Haloquadratum walsbyi (strain DSM 16790 / HBSQ001).